Consider the following 730-residue polypeptide: Elongation factor 2 (730 aa).

Positions 19 to 229 constitute a tr-type G domain; the sequence is LMIRNIGIVA…GVSFSEVFNY (211 aa). GTP contacts are provided by residues 28 to 35, 94 to 98, and 148 to 151; these read AHIDHGKT, DTPGH, and NKVD. The residue at position 596 (H596) is a Diphthamide.

This sequence belongs to the TRAFAC class translation factor GTPase superfamily. Classic translation factor GTPase family. EF-G/EF-2 subfamily.

The protein localises to the cytoplasm. Catalyzes the GTP-dependent ribosomal translocation step during translation elongation. During this step, the ribosome changes from the pre-translocational (PRE) to the post-translocational (POST) state as the newly formed A-site-bound peptidyl-tRNA and P-site-bound deacylated tRNA move to the P and E sites, respectively. Catalyzes the coordinated movement of the two tRNA molecules, the mRNA and conformational changes in the ribosome. This chain is Elongation factor 2 (fusA), found in Methanococcoides burtonii (strain DSM 6242 / NBRC 107633 / OCM 468 / ACE-M).